A 427-amino-acid polypeptide reads, in one-letter code: Enolase (427 aa).

Gln-163 contacts (2R)-2-phosphoglycerate. Glu-205 serves as the catalytic Proton donor. 3 residues coordinate Mg(2+): Asp-242, Glu-288, and Asp-315. The (2R)-2-phosphoglycerate site is built by Lys-340, Arg-369, Ser-370, and Lys-391. Catalysis depends on Lys-340, which acts as the Proton acceptor.

Belongs to the enolase family. It depends on Mg(2+) as a cofactor.

Its subcellular location is the cytoplasm. The protein localises to the secreted. It is found in the cell surface. It carries out the reaction (2R)-2-phosphoglycerate = phosphoenolpyruvate + H2O. It functions in the pathway carbohydrate degradation; glycolysis; pyruvate from D-glyceraldehyde 3-phosphate: step 4/5. Its function is as follows. Catalyzes the reversible conversion of 2-phosphoglycerate (2-PG) into phosphoenolpyruvate (PEP). It is essential for the degradation of carbohydrates via glycolysis. The protein is Enolase of Cytophaga hutchinsonii (strain ATCC 33406 / DSM 1761 / CIP 103989 / NBRC 15051 / NCIMB 9469 / D465).